We begin with the raw amino-acid sequence, 164 residues long: MESVLKSLFVLLVATSFTLAKEIPAKVSKPQTLSRGWGDNLEWVQTYEEGLYKAKAENKPLMLINHRNDCPHSLALKKAFAEHQGIQKLAEEFILLNVVYDPTDKNLQLDGQYVPKIIFVDPSLVVRADLPGKYSNHQYTYEPADIDHLFENMKKALVLLKTEL.

Residues 1 to 20 form the signal peptide; sequence MESVLKSLFVLLVATSFTLA. 2 consecutive short sequence motifs (homodimer stabilization; interchain) follow at residues 34-43 and 49-56; these read SRGWGDNLEW and EGLYKAKA.

This sequence belongs to the AGR family. In terms of assembly, monomer and homodimer.

Its subcellular location is the secreted. The protein resides in the endoplasmic reticulum. This is Anterior gradient protein 2-B (agr2-b) from Xenopus laevis (African clawed frog).